Reading from the N-terminus, the 137-residue chain is Large ribosomal subunit protein uL16 (137 aa).

This sequence belongs to the universal ribosomal protein uL16 family. Part of the 50S ribosomal subunit.

Functionally, binds 23S rRNA and is also seen to make contacts with the A and possibly P site tRNAs. The polypeptide is Large ribosomal subunit protein uL16 (Chlamydia abortus (strain DSM 27085 / S26/3) (Chlamydophila abortus)).